The following is a 310-amino-acid chain: Olfactory receptor 8I2 (310 aa).

Topologically, residues 1–25 are extracellular; it reads MAGNNFTEVTVFILSGFANHPELQV. Asn5 is a glycosylation site (N-linked (GlcNAc...) asparagine). The helical transmembrane segment at 26–46 threads the bilayer; that stretch reads SLFLMFLFIYLFTVLGNLGLI. At 47–54 the chain is on the cytoplasmic side; that stretch reads TLIRMDSQ. The helical transmembrane segment at 55-75 threads the bilayer; sequence LHTPMYFFLSNLAFIDIFYSS. Residues 76–99 lie on the Extracellular side of the membrane; that stretch reads TVTPKALVNFQSNRRSISFVGCFV. Cysteines 97 and 188 form a disulfide. Residues 100–120 traverse the membrane as a helical segment; sequence QMYFFVGLVCCECFLLGSMAY. Over 121–139 the chain is Cytoplasmic; sequence NRYIAICNPLLYSVVMSQK. The helical transmembrane segment at 140–160 threads the bilayer; that stretch reads VSNWLGVMPYVIGFTSSLISV. Residues 161 to 196 lie on the Extracellular side of the membrane; sequence WVISSLAFCDSSINHFFCDTTALLALSCVDTFGTEM. A helical membrane pass occupies residues 197-216; sequence VSFVLAGFTLLSSLLIITVT. Residues 217–236 lie on the Cytoplasmic side of the membrane; that stretch reads YIIIISAILRIQSAAGRQKA. Residues 237–257 traverse the membrane as a helical segment; that stretch reads FSTCASHLMAVTIFYGSLIFT. Topologically, residues 258–270 are extracellular; that stretch reads YLQPDNTSSLTQA. The helical transmembrane segment at 271–291 threads the bilayer; it reads QVASVFYTIVIPMLNPLIYSL. Topologically, residues 292–310 are cytoplasmic; it reads RNKDVKNALLRVIHRKLFP.

The protein belongs to the G-protein coupled receptor 1 family.

The protein resides in the cell membrane. In terms of biological role, odorant receptor. In Homo sapiens (Human), this protein is Olfactory receptor 8I2 (OR8I2).